The following is a 345-amino-acid chain: Protein GAMETE CELL DEFECTIVE 1, mitochondrial (345 aa).

A mitochondrion-targeting transit peptide spans M1–G43. The disordered stretch occupies residues L36 to S81.

In terms of tissue distribution, expressed in roots, stems, leaves and florets.

The protein localises to the mitochondrion. Functionally, essential for fertility (male and female gametophyte functions and development). Required for the integrity of female gametic mitochondria. Involved in embryo apical-basal patterning, and particularly dorsal-ventral patterning, during early embryogenesis, and endosperm free nucleus positioning and development as well as early endosperm development, probably by modulating the expression pattern of related genes (e.g. AL1, MYB3/AL2, CYP78A13/GE, PNH1, HAZ1, MPK6 and OSH1). Has function in triggering of endosperm programmed cell death (PCD) leading to syncytial endosperm cellularization and starchy endosperm cell maturation. Implicated in central vacuole dynamics necessary for microspore development leading to pollen production, and for pollen development and germination. The polypeptide is Protein GAMETE CELL DEFECTIVE 1, mitochondrial (Oryza sativa subsp. japonica (Rice)).